Here is a 27-residue protein sequence, read N- to C-terminus: L-amino-acid oxidase (27 aa).

As to quaternary structure, homodimer; non-covalently linked. It depends on FAD as a cofactor. Contains 2 disulfide bonds. Post-translationally, N-glycosylated. In terms of tissue distribution, expressed by the venom gland.

Its subcellular location is the secreted. It catalyses the reaction an L-alpha-amino acid + O2 + H2O = a 2-oxocarboxylate + H2O2 + NH4(+). The catalysed reaction is L-leucine + O2 + H2O = 4-methyl-2-oxopentanoate + H2O2 + NH4(+). Its function is as follows. Catalyzes an oxidative deamination of predominantly hydrophobic and aromatic L-amino acids, thus producing hydrogen peroxide that may contribute to the diverse toxic effects of this enzyme. Shows activity on L-Leu. Exhibits diverse biological activities, such as hemolysis, edema, apoptosis, as well as induction of platelet aggregation. Effects of snake L-amino oxidases on platelets are controversial, since they either induce aggregation or inhibit agonist-induced aggregation. These different effects are probably due to different experimental conditions. Unlike other snake venom L-amino acid oxidases, does not induce hemorrhage. This protein may also have antibacterial and antiparasitic activities. This is L-amino-acid oxidase from Eristicophis macmahoni (Leaf-nosed viper).